Consider the following 103-residue polypeptide: N(4)-acetylcytidine amidohydrolase (103 aa).

An ASCH domain is found at 6 to 92 (TFFERFEPGI…VIQEIYPGLE (87 aa)). K20 (proton acceptor) is an active-site residue. T23 acts as the Nucleophile in catalysis. E73 acts as the Proton donor in catalysis.

This sequence belongs to the N(4)-acetylcytidine amidohydrolase family.

It catalyses the reaction N(4)-acetylcytidine + H2O = cytidine + acetate + H(+). The enzyme catalyses N(4)-acetyl-2'-deoxycytidine + H2O = 2'-deoxycytidine + acetate + H(+). It carries out the reaction N(4)-acetylcytosine + H2O = cytosine + acetate + H(+). Catalyzes the hydrolysis of N(4)-acetylcytidine (ac4C). This is N(4)-acetylcytidine amidohydrolase from Shewanella sp. (strain MR-7).